Consider the following 248-residue polypeptide: Ankyrin repeat domain-containing protein 45 (248 aa).

Composition is skewed to acidic residues over residues 1 to 10 (MEPEETLESE) and 22 to 33 (EYEESQEAEETG). The tract at residues 1–42 (MEPEETLESESSEKSLFSSQQEYEESQEAEETGAENPLLQPT) is disordered. ANK repeat units follow at residues 75-104 (VGRN…NLNE) and 108-137 (RGYT…DIEA).

It is found in the cytoplasm. The protein localises to the midbody. The protein resides in the midbody ring. Its subcellular location is the cleavage furrow. Its function is as follows. May play a role during cell division. The chain is Ankyrin repeat domain-containing protein 45 (Ankrd45) from Mus musculus (Mouse).